The following is a 66-amino-acid chain: Beta-toxin ChFII.7 (66 aa).

One can recognise an LCN-type CS-alpha/beta domain in the interval 1-66; it reads KEGYLVNHST…VWPLPKKTCN (66 aa). Cystine bridges form between C12/C65, C16/C41, C25/C46, and C29/C48. N66 bears the Asparagine amide mark.

In terms of tissue distribution, expressed by the venom gland.

Its subcellular location is the secreted. Its function is as follows. Beta toxins bind voltage independently at site-4 of sodium channels (Nav) and shift the activation voltage toward more negative potentials, thereby affecting sodium channel activation CC and promoting spontaneous and repetitive firing. This is Beta-toxin ChFII.7 from Centruroides hirsutipalpus (Scorpion).